A 141-amino-acid polypeptide reads, in one-letter code: ATP synthase epsilon chain (141 aa).

This sequence belongs to the ATPase epsilon chain family. As to quaternary structure, F-type ATPases have 2 components, CF(1) - the catalytic core - and CF(0) - the membrane proton channel. CF(1) has five subunits: alpha(3), beta(3), gamma(1), delta(1), epsilon(1). CF(0) has three main subunits: a, b and c.

Its subcellular location is the cell inner membrane. Produces ATP from ADP in the presence of a proton gradient across the membrane. This is ATP synthase epsilon chain from Paraburkholderia phytofirmans (strain DSM 17436 / LMG 22146 / PsJN) (Burkholderia phytofirmans).